A 711-amino-acid polypeptide reads, in one-letter code: Retrovirus-related Pol polyprotein from type-1 retrotransposable element R2 (711 aa).

The region spanning 45-323 (LHLLRGHVPT…QTFRYLGHFF (279 aa)) is the Reverse transcriptase domain. The tract at residues 444 to 711 (LFSCPSFDHL…RAVWSRQAGA (268 aa)) is nucleic acid-binding endonuclease.

It catalyses the reaction DNA(n) + a 2'-deoxyribonucleoside 5'-triphosphate = DNA(n+1) + diphosphate. This chain is Retrovirus-related Pol polyprotein from type-1 retrotransposable element R2, found in Popillia japonica (Japanese beetle).